The primary structure comprises 538 residues: Phosphoenolpyruvate carboxykinase (ATP) (538 aa).

Arg-61, Tyr-195, and Lys-201 together coordinate substrate. Residues Lys-201, His-220, and 236-244 (GLSGTGKTT) contribute to the ATP site. Residues Lys-201 and His-220 each coordinate Mn(2+). Asp-257 is a Mn(2+) binding site. Residues Glu-285, Arg-323, and Thr-449 each coordinate ATP. Arg-323 is a substrate binding site.

This sequence belongs to the phosphoenolpyruvate carboxykinase (ATP) family. The cofactor is Mn(2+).

The protein localises to the cytoplasm. It carries out the reaction oxaloacetate + ATP = phosphoenolpyruvate + ADP + CO2. Its pathway is carbohydrate biosynthesis; gluconeogenesis. In terms of biological role, involved in the gluconeogenesis. Catalyzes the conversion of oxaloacetate (OAA) to phosphoenolpyruvate (PEP) through direct phosphoryl transfer between the nucleoside triphosphate and OAA. This is Phosphoenolpyruvate carboxykinase (ATP) from Nitrobacter hamburgensis (strain DSM 10229 / NCIMB 13809 / X14).